Here is a 503-residue protein sequence, read N- to C-terminus: Lycopene beta cyclase, chloroplastic/chromoplastic (503 aa).

The transit peptide at 1 to 85 (MDTLLRTHNR…DLPLYDPSKA (85 aa)) directs the protein to the chloroplast and chromoplast. An NAD(+)-binding site is contributed by 90–117 (LAVVGGGPLARSCSTSLGGGLSVVSIDP).

It belongs to the lycopene cyclase family.

It localises to the plastid. The protein localises to the chloroplast. It is found in the chromoplast. Its subcellular location is the chromoplast membrane. The protein resides in the chloroplast membrane. It carries out the reaction a carotenoid psi-end group = a carotenoid beta-end derivative. It functions in the pathway carotenoid biosynthesis; beta-carotene biosynthesis. The protein operates within carotenoid biosynthesis; beta-zeacarotene biosynthesis. In terms of biological role, catalyzes the double cyclization reaction which converts lycopene to beta-carotene and neurosporene to beta-zeacarotene. The protein is Lycopene beta cyclase, chloroplastic/chromoplastic (LCY1) of Narcissus pseudonarcissus (Daffodil).